Reading from the N-terminus, the 455-residue chain is Argininosuccinate lyase (455 aa).

The protein belongs to the lyase 1 family. Argininosuccinate lyase subfamily.

It localises to the cytoplasm. The catalysed reaction is 2-(N(omega)-L-arginino)succinate = fumarate + L-arginine. It functions in the pathway amino-acid biosynthesis; L-arginine biosynthesis; L-arginine from L-ornithine and carbamoyl phosphate: step 3/3. The sequence is that of Argininosuccinate lyase from Shewanella baltica (strain OS195).